We begin with the raw amino-acid sequence, 227 residues long: 2-C-methyl-D-erythritol 4-phosphate cytidylyltransferase (227 aa).

Belongs to the IspD/TarI cytidylyltransferase family. IspD subfamily.

It catalyses the reaction 2-C-methyl-D-erythritol 4-phosphate + CTP + H(+) = 4-CDP-2-C-methyl-D-erythritol + diphosphate. The protein operates within isoprenoid biosynthesis; isopentenyl diphosphate biosynthesis via DXP pathway; isopentenyl diphosphate from 1-deoxy-D-xylulose 5-phosphate: step 2/6. Its function is as follows. Catalyzes the formation of 4-diphosphocytidyl-2-C-methyl-D-erythritol from CTP and 2-C-methyl-D-erythritol 4-phosphate (MEP). In Dehalococcoides mccartyi (strain ATCC BAA-2266 / KCTC 15142 / 195) (Dehalococcoides ethenogenes (strain 195)), this protein is 2-C-methyl-D-erythritol 4-phosphate cytidylyltransferase.